We begin with the raw amino-acid sequence, 743 residues long: Polyribonucleotide nucleotidyltransferase (743 aa).

Mg(2+) contacts are provided by Asp489 and Asp495. A KH domain is found at 556-618 (PRIEKMHIGK…PCIDAAIGMI (63 aa)). In terms of domain architecture, S1 motif spans 628 to 698 (GETYPGKITS…KTGKFKLSRK (71 aa)). Residues 704-743 (PEGYVEPQPRERRERREGGREGGRNFERRGGDRDHREPRG) form a disordered region.

It belongs to the polyribonucleotide nucleotidyltransferase family. Mg(2+) is required as a cofactor.

The protein resides in the cytoplasm. The enzyme catalyses RNA(n+1) + phosphate = RNA(n) + a ribonucleoside 5'-diphosphate. Functionally, involved in mRNA degradation. Catalyzes the phosphorolysis of single-stranded polyribonucleotides processively in the 3'- to 5'-direction. This chain is Polyribonucleotide nucleotidyltransferase, found in Porphyromonas gingivalis (strain ATCC BAA-308 / W83).